Here is a 479-residue protein sequence, read N- to C-terminus: Integrator complex subunit 12 (479 aa).

A disordered region spans residues 57–140 (SKVSLPKMTK…SPIAFQTKDI (84 aa)). The span at 70–90 (KSSSSSSASSSITTTSSSKSS) shows a compositional bias: low complexity. Basic and acidic residues predominate over residues 91–128 (TSEKSKKESEKRTLEKIRVDPGEGVEPPKKPRLEKQDS). A PHD-type zinc finger spans residues 161–217 (GLACVVCRQMTVTSGNQLVECQECHNLYHQECHKPQVTDKDVNDPRLVWYCARCTRQ). Disordered regions lie at residues 221–241 (MAQK…TTVP), 274–293 (TAAS…LPPG), and 305–479 (SNVG…KLKK). 2 stretches are compositionally biased toward low complexity: residues 223–239 (QKTQ…LATT) and 280–289 (SSSSSSSSSS). Residues 305–328 (SNVGPSSTKLSTSQSGNSKTSPAA) show a composition bias toward polar residues. Gly residues predominate over residues 354 to 364 (SSAGSGNGNNG). Low complexity predominate over residues 399 to 411 (GSLSPGAAPSSSL). Residues 412–428 (GGNGGSGGNGAGNGGNS) show a composition bias toward gly residues. Residues 429–451 (AGSSSSSGNNNNNGAKASADGKA) are compositionally biased toward low complexity. Positions 466–479 (QMVKKKAAQKKLKK) are enriched in basic residues.

This sequence belongs to the Integrator subunit 12 family. In terms of assembly, component of the Integrator complex, composed of core subunits INTS1, INTS2, INTS3, INTS4, INTS5, INTS6, INTS7, INTS8, INTS9/RC74, INTS10, INTS11/CPSF3L, INTS12, INTS13, INTS14 and INTS15. The core complex associates with protein phosphatase 2A subunits PPP2CA and PPP2R1A, to form the Integrator-PP2A (INTAC) complex.

The protein localises to the nucleus. Its function is as follows. Component of the integrator complex, a multiprotein complex that terminates RNA polymerase II (Pol II) transcription in the promoter-proximal region of genes. The integrator complex provides a quality checkpoint during transcription elongation by driving premature transcription termination of transcripts that are unfavorably configured for transcriptional elongation: the complex terminates transcription by (1) catalyzing dephosphorylation of the C-terminal domain (CTD) of Pol II subunit POLR2A/RPB1 and SUPT5H/SPT5, (2) degrading the exiting nascent RNA transcript via endonuclease activity and (3) promoting the release of Pol II from bound DNA. The integrator complex is also involved in terminating the synthesis of non-coding Pol II transcripts, such as enhancer RNAs (eRNAs), small nuclear RNAs (snRNAs), telomerase RNAs and long non-coding RNAs (lncRNAs). This Danio rerio (Zebrafish) protein is Integrator complex subunit 12 (ints12).